Here is a 1378-residue protein sequence, read N- to C-terminus: Hybrid signal transduction histidine kinase H (1378 aa).

Positions 212-242 form a coiled coil; it reads KEKFKKEELINDFKSRLETLENKIDQRVDER. A PAS domain is found at 243-314; sequence IETRFKYVLE…NNNNNNNNNN (72 aa). Positions 294–337 are disordered; it reads YQQHNNNNNNNNNNNNNNNNNNNNNSNNKSPIINSPNTTSPTNT. Low complexity predominate over residues 298-337; it reads NNNNNNNNNNNNNNNNNNNNNSNNKSPIINSPNTTSPTNT. A Histidine kinase domain is found at 498-805; that stretch reads TMSHEMRTPL…SFHFLVEVFF (308 aa). His-501 bears the Phosphohistidine; by autocatalysis mark. Residues 663 to 696 are compositionally biased toward low complexity; that stretch reads NNSNNSNNNHNHNNNNNNNNHLNCSGSFNNNGFN. Disordered stretches follow at residues 663–717, 905–924, and 1103–1213; these read NNSN…DKHC, TNNN…STTT, and NNSN…HPNP. Basic residues predominate over residues 697-714; it reads HGHHHHHHHHHHHHHHHD. Composition is skewed to low complexity over residues 1103-1119 and 1136-1187; these read NNSN…SGSS and SPSL…NNNN. A compositionally biased stretch (polar residues) spans 1188 to 1206; the sequence is LNHYNSDSILSSDLSPQQH. Positions 1244–1364 constitute a Response regulatory domain; that stretch reads KIMVAEDSLV…ILAVELKRAW (121 aa). Asp-1297 is modified (4-aspartylphosphate).

Activation probably requires transfer of a phosphate group between a histidine in the kinase core (transmitter) domain and an aspartate of the receiver domain.

The enzyme catalyses ATP + protein L-histidine = ADP + protein N-phospho-L-histidine.. Functionally, acts as a receptor histidine kinase for a signal transduction pathway. This protein undergoes an ATP-dependent autophosphorylation at a conserved histidine residue in the kinase core, and a phosphoryl group is then transferred to a conserved aspartate residue in the receiver domain. The protein is Hybrid signal transduction histidine kinase H (dhkH) of Dictyostelium discoideum (Social amoeba).